We begin with the raw amino-acid sequence, 323 residues long: ATP synthase gamma chain (323 aa).

The tract at residues 215 to 237 is disordered; that stretch reads PAGGPAKEQEQGDEGGHGAPSAA. Basic and acidic residues predominate over residues 221-230; sequence KEQEQGDEGG.

Belongs to the ATPase gamma chain family. F-type ATPases have 2 components, CF(1) - the catalytic core - and CF(0) - the membrane proton channel. CF(1) has five subunits: alpha(3), beta(3), gamma(1), delta(1), epsilon(1). CF(0) has three main subunits: a, b and c.

The protein resides in the cell inner membrane. Produces ATP from ADP in the presence of a proton gradient across the membrane. The gamma chain is believed to be important in regulating ATPase activity and the flow of protons through the CF(0) complex. The protein is ATP synthase gamma chain of Sorangium cellulosum (strain So ce56) (Polyangium cellulosum (strain So ce56)).